A 508-amino-acid polypeptide reads, in one-letter code: Photosystem II CP47 reaction center protein (508 aa).

6 helical membrane passes run 21–36 (SVHIMHTALVSGWAGS), 101–115 (IMLSGLCFLAAIWHW), 140–156 (GIHLFLAGVACFGFGAF), 203–218 (IAAGTLGILAGLFHLS), 237–252 (VLSSSIAAVFFAAFVV), and 457–472 (SFALLFFFGHIWHGAR).

Belongs to the PsbB/PsbC family. PsbB subfamily. PSII is composed of 1 copy each of membrane proteins PsbA, PsbB, PsbC, PsbD, PsbE, PsbF, PsbH, PsbI, PsbJ, PsbK, PsbL, PsbM, PsbT, PsbX, PsbY, PsbZ, Psb30/Ycf12, at least 3 peripheral proteins of the oxygen-evolving complex and a large number of cofactors. It forms dimeric complexes. Requires Binds multiple chlorophylls. PSII binds additional chlorophylls, carotenoids and specific lipids. as cofactor.

The protein localises to the plastid. It is found in the chloroplast thylakoid membrane. One of the components of the core complex of photosystem II (PSII). It binds chlorophyll and helps catalyze the primary light-induced photochemical processes of PSII. PSII is a light-driven water:plastoquinone oxidoreductase, using light energy to abstract electrons from H(2)O, generating O(2) and a proton gradient subsequently used for ATP formation. This chain is Photosystem II CP47 reaction center protein, found in Piper cenocladum (Ant piper).